The chain runs to 89 residues: Serine-rich and transmembrane domain-containing 2 (89 aa).

Residue N11 is glycosylated (N-linked (GlcNAc...) asparagine). The helical transmembrane segment at 38–58 threads the bilayer; sequence YVGLFLSLLAILLILLFTMLL.

It localises to the membrane. This chain is Serine-rich and transmembrane domain-containing 2, found in Mus musculus (Mouse).